The chain runs to 684 residues: Rabphilin-3A (684 aa).

Residues 1–21 (MTDTVVNRWMYPGDGPLQSND) are disordered. A RabBD domain is found at 40–157 (QRKQEELTDE…KRSGAWFFKG (118 aa)). The FYVE-type zinc-finger motif lies at 88 to 145 (GDGVNRCILCGEQLGMLGSACVVCEDCKKNVCTKCGVETSNNRPHPVWLCKICLEQRE). Zn(2+) is bound by residues Cys94, Cys97, Cys111, Cys114, Cys119, Cys122, Cys137, and Cys140. A disordered region spans residues 162-377 (VLPQPMPIKK…EEEEANSYDS (216 aa)). Basic and acidic residues predominate over residues 199–208 (ARGDMEDRRA). Residue Arg223 is modified to Omega-N-methylarginine. The segment covering 243–252 (RDSEGWDHGH) has biased composition (basic and acidic residues). A Phosphoserine modification is found at Ser274. Pro residues predominate over residues 283-299 (ASMPSPAPPQPVQPGPP). Low complexity predominate over residues 301-310 (GSRAAPGPGR). Residues 382 to 504 (TLGALEFSLL…KANQRKNFNI (123 aa)) enclose the C2 1 domain. Met412, Asp413, Asp419, Asp474, Glu475, Asp476, Glu482, Glu529, Asp571, Asp577, Asp631, Tyr632, Asp633, and Asp639 together coordinate Ca(2+). Positions 540-673 (ERGKILVSLM…NKDKKIERWH (134 aa)) constitute a C2 2 domain. Phosphoserine is present on residues Ser682 and Ser683.

In terms of assembly, interacts with RAB3B, RAB3C, RAB3D, RAB8A, RAB27A and RAB27B. Interacts with RAB3A; this interaction recruits RPH3A to synaptic vesicules. Interacts (via C2B domain) with SNAP25. Interacts with deubiquitinating enzyme CAND1; this interaction results in the deubiquitination of RPH3A. Interacts with GRIN2A and DLG4; this ternary complex regulates NMDA receptor composition at postsynaptic membranes. Interacts with SNCA. It depends on Ca(2+) as a cofactor. Post-translationally, ubiquitinated. Deubiquitinated by CAND1 to prevent its degradation. As to expression, specifically expressed in brain.

It is found in the cytoplasmic vesicle. The protein localises to the secretory vesicle. It localises to the synaptic vesicle membrane. The protein resides in the cell projection. Its subcellular location is the dendritic spine. It is found in the postsynaptic cell membrane. The protein localises to the membrane. Plays an essential role in docking and fusion steps of regulated exocytosis. At the presynaptic level, RPH3A is recruited by RAB3A to the synaptic vesicle membrane in a GTP-dependent manner where it modulates synaptic vesicle trafficking and calcium-triggered neurotransmitter release. In the post-synaptic compartment, forms a ternary complex with GRIN2A and DLG4 and regulates NMDA receptor stability. Also plays a role in the exocytosis of arginine vasopressin hormone. This Rattus norvegicus (Rat) protein is Rabphilin-3A (Rph3a).